Consider the following 139-residue polypeptide: Large ribosomal subunit protein uL16c (139 aa).

The disordered stretch occupies residues 1–20; the sequence is MLSPKRTKYRKHHRGRMKGK.

The protein belongs to the universal ribosomal protein uL16 family. As to quaternary structure, part of the 50S ribosomal subunit.

It localises to the plastid. It is found in the chloroplast. This is Large ribosomal subunit protein uL16c from Pleurastrum terricola (Filamentous green alga).